A 386-amino-acid chain; its full sequence is Alkanesulfonate monooxygenase (386 aa).

This sequence belongs to the SsuD family.

It carries out the reaction an alkanesulfonate + FMNH2 + O2 = an aldehyde + FMN + sulfite + H2O + 2 H(+). In terms of biological role, catalyzes the desulfonation of aliphatic sulfonates. In Delftia acidovorans (strain DSM 14801 / SPH-1), this protein is Alkanesulfonate monooxygenase.